A 247-amino-acid chain; its full sequence is ATP synthase subunit a, chloroplastic (247 aa).

5 helical membrane passes run 38–58 (QVLITSWVVIAILLGSAAIAV), 95–115 (VPFIGTMFLFIFVSNWSGALL), 134–154 (INTTVALALLTSAAYFYAGLT), 199–219 (LVVVVLVSLVPLVVPIPVMFL), and 220–240 (GLFTSGIQALIFATLAAAYIG).

The protein belongs to the ATPase A chain family. In terms of assembly, F-type ATPases have 2 components, CF(1) - the catalytic core - and CF(0) - the membrane proton channel. CF(1) has five subunits: alpha(3), beta(3), gamma(1), delta(1), epsilon(1). CF(0) has four main subunits: a, b, b' and c.

The protein localises to the plastid. The protein resides in the chloroplast thylakoid membrane. In terms of biological role, key component of the proton channel; it plays a direct role in the translocation of protons across the membrane. In Ceratophyllum demersum (Rigid hornwort), this protein is ATP synthase subunit a, chloroplastic.